Here is a 139-residue protein sequence, read N- to C-terminus: Large-conductance mechanosensitive channel (139 aa).

Transmembrane regions (helical) follow at residues 14 to 34 (VIDL…INSL) and 81 to 101 (GSFL…FMIV).

The protein belongs to the MscL family. As to quaternary structure, homopentamer.

The protein resides in the cell membrane. Functionally, channel that opens in response to stretch forces in the membrane lipid bilayer. May participate in the regulation of osmotic pressure changes within the cell. This chain is Large-conductance mechanosensitive channel, found in Chloroflexus aurantiacus (strain ATCC 29366 / DSM 635 / J-10-fl).